We begin with the raw amino-acid sequence, 164 residues long: Thiol peroxidase (164 aa).

Positions 16-162 (LQVGEIAHDF…YDAAIEAVKV (147 aa)) constitute a Thioredoxin domain. The Cysteine sulfenic acid (-SOH) intermediate role is filled by Cys58. Cys58 and Cys92 form a disulfide bridge.

The protein belongs to the peroxiredoxin family. Tpx subfamily. As to quaternary structure, homodimer.

It carries out the reaction a hydroperoxide + [thioredoxin]-dithiol = an alcohol + [thioredoxin]-disulfide + H2O. Thiol-specific peroxidase that catalyzes the reduction of hydrogen peroxide and organic hydroperoxides to water and alcohols, respectively. Plays a role in cell protection against oxidative stress by detoxifying peroxides. The polypeptide is Thiol peroxidase (Streptococcus parasanguinis).